Consider the following 147-residue polypeptide: 3-dehydroquinate dehydratase 2 (147 aa).

The Proton acceptor role is filled by Tyr-23. Positions 74, 80, and 87 each coordinate substrate. Residue His-100 is the Proton donor of the active site. Substrate is bound by residues 101–102 and Arg-111; that span reads IS.

Belongs to the type-II 3-dehydroquinase family. As to quaternary structure, homododecamer.

It catalyses the reaction 3-dehydroquinate = 3-dehydroshikimate + H2O. It functions in the pathway metabolic intermediate biosynthesis; chorismate biosynthesis; chorismate from D-erythrose 4-phosphate and phosphoenolpyruvate: step 3/7. Its function is as follows. Catalyzes a trans-dehydration via an enolate intermediate. In Agrobacterium fabrum (strain C58 / ATCC 33970) (Agrobacterium tumefaciens (strain C58)), this protein is 3-dehydroquinate dehydratase 2 (aroQ2).